A 357-amino-acid chain; its full sequence is Acyl-coenzyme A diphosphatase NUDT19 (357 aa).

In terms of domain architecture, Nudix hydrolase spans 10 to 242 (AATVMLAAGW…IWLAPPQFYE (233 aa)). A disordered region spans residues 72-94 (PRFGLGPEPPRQPPFPGLSHGDA). Pro residues predominate over residues 78-87 (PEPPRQPPFP). The short motif at 97 to 118 (AALPDDVALRICAIRETFEEAG) is the Nudix box element. Mg(2+) contacts are provided by E112 and E116. K300 carries the post-translational modification N6-succinyllysine. A Microbody targeting signal motif is present at residues 355-357 (AHL).

This sequence belongs to the Nudix hydrolase family. In terms of assembly, monomer. Mg(2+) is required as a cofactor. It depends on Mn(2+) as a cofactor.

It localises to the peroxisome. The enzyme catalyses an acyl-CoA + H2O = an acyl-4'-phosphopantetheine + adenosine 3',5'-bisphosphate + 2 H(+). It carries out the reaction CoA + H2O = (R)-4'-phosphopantetheine + adenosine 3',5'-bisphosphate + 2 H(+). It catalyses the reaction hexanoyl-CoA + H2O = hexanoyl-4'-phosphopantetheine + adenosine 3',5'-bisphosphate + 2 H(+). The catalysed reaction is octanoyl-CoA + H2O = S-octanoyl-4'-phosphopantetheine + adenosine 3',5'-bisphosphate + 2 H(+). The enzyme catalyses butanoyl-CoA + H2O = S-butanoyl-4'-phosphopantetheine + adenosine 3',5'-bisphosphate + 2 H(+). It carries out the reaction propanoyl-CoA + H2O = propanoyl-4'-phosphopantetheine + adenosine 3',5'-bisphosphate + 2 H(+). It catalyses the reaction malonyl-CoA + H2O = malonyl-4'-phosphopantetheine + adenosine 3',5'-bisphosphate + 2 H(+). The catalysed reaction is succinyl-CoA + H2O = succinyl-4'-phosphopantetheine + adenosine 3',5'-bisphosphate + 2 H(+). The enzyme catalyses choloyl-CoA + H2O = S-choloyl-4'-phosphopantetheine + adenosine 3',5'-bisphosphate + 2 H(+). It carries out the reaction 4,8-dimethylnonanoyl-CoA + H2O = S-(4,8-dimethylnonanoyl)-4'-phosphopantetheine + adenosine 3',5'-bisphosphate + 2 H(+). It catalyses the reaction (9Z,12Z,15Z)-octadecatrienoyl-CoA + H2O = S-(9Z,12Z,15Z-octadecatrienoyl)-4'-phosphopantetheine + adenosine 3',5'-bisphosphate + 2 H(+). The catalysed reaction is (9Z,12Z)-octadecadienoyl-CoA + H2O = S-(9Z,12Z-octadecadienoyl)-4'-phosphopantetheine + adenosine 3',5'-bisphosphate + 2 H(+). The enzyme catalyses (9Z)-hexadecenoyl-CoA + H2O = S-(9Z-hexadecenoyl)-4'-phosphopantetheine + adenosine 3',5'-bisphosphate + 2 H(+). It carries out the reaction (9Z)-tetradecenoyl-CoA + H2O = S-(9Z-tetradecenoyl)-4'-phosphopantetheine + adenosine 3',5'-bisphosphate + 2 H(+). It catalyses the reaction (6Z)-octenoyl-CoA + H2O = S-(6Z-octenoyl)-4'-phosphopantetheine + adenosine 3',5'-bisphosphate + 2 H(+). The catalysed reaction is hexadecanoyl-CoA + H2O = S-hexadecanoyl-4'-phosphopantetheine + adenosine 3',5'-bisphosphate + 2 H(+). The enzyme catalyses tetradecanoyl-CoA + H2O = tetradecanoyl-4'-phosphopantetheine + adenosine 3',5'-bisphosphate + 2 H(+). It carries out the reaction dodecanoyl-CoA + H2O = S-dodecanoyl-4'-phosphopantetheine + adenosine 3',5'-bisphosphate + 2 H(+). It catalyses the reaction a 5'-end CoA-ribonucleoside in mRNA + H2O = a 5'-end phospho-adenosine-phospho-ribonucleoside in mRNA + (R)-4'-phosphopantetheine + 2 H(+). In terms of biological role, fatty acyl-coenzyme A (CoA) diphosphatase that hydrolyzes fatty acyl-CoA to yield acyl-4'-phosphopantetheine and adenosine 3',5'-bisphosphate. Mediates the hydrolysis of a wide range of CoA esters, including choloyl-CoA and branched-chain fatty-acyl-CoA esters and at low substrate concentrations medium and long-chain fatty-acyl-CoA esters are the primary substrates. Highest activity seen with medium-chain acyl-CoA esters and higher rates of activity seen with the unsaturated acyl-CoA esters compared with the saturated esters. Exhibits decapping activity towards dpCoA-capped RNAs in vitro. The chain is Acyl-coenzyme A diphosphatase NUDT19 (Nudt19) from Mus caroli (Ryukyu mouse).